A 692-amino-acid polypeptide reads, in one-letter code: Elongation factor G (692 aa).

A tr-type G domain is found at 8–283 (KNTRNIGIMA…AVVDYLPSPV (276 aa)). Residues 17–24 (AHIDAGKT), 81–85 (DTPGH), and 135–138 (NKMD) each bind GTP.

It belongs to the TRAFAC class translation factor GTPase superfamily. Classic translation factor GTPase family. EF-G/EF-2 subfamily.

It localises to the cytoplasm. In terms of biological role, catalyzes the GTP-dependent ribosomal translocation step during translation elongation. During this step, the ribosome changes from the pre-translocational (PRE) to the post-translocational (POST) state as the newly formed A-site-bound peptidyl-tRNA and P-site-bound deacylated tRNA move to the P and E sites, respectively. Catalyzes the coordinated movement of the two tRNA molecules, the mRNA and conformational changes in the ribosome. This Exiguobacterium sp. (strain ATCC BAA-1283 / AT1b) protein is Elongation factor G.